The chain runs to 463 residues: GTPase Der (463 aa).

EngA-type G domains follow at residues 2–164 and 198–369; these read KKII…PKSK and IKIG…KNYT. GTP is bound by residues 8-15, 55-59, 116-119, 204-211, 251-255, and 315-318; these read GRPNVGKS, DSGGL, NKVD, GRVNVGKS, DTAGI, and NKWD. The region spanning 370 to 454 is the KH-like domain; sequence QKMKTSRLNE…PVILIPKNRS (85 aa).

This sequence belongs to the TRAFAC class TrmE-Era-EngA-EngB-Septin-like GTPase superfamily. EngA (Der) GTPase family. Associates with the 50S ribosomal subunit.

Functionally, GTPase that plays an essential role in the late steps of ribosome biogenesis. In Campylobacter fetus subsp. fetus (strain 82-40), this protein is GTPase Der.